Reading from the N-terminus, the 1966-residue chain is Dedicator of cytokinesis protein 4 (1966 aa).

In terms of domain architecture, SH3 spans 6 to 67; it reads EHEKYGVVIA…PSSYVHLKNA (62 aa). The residue at position 167 (Tyr167) is a Phosphotyrosine. The residue at position 193 (Thr193) is a Phosphothreonine. In terms of domain architecture, C2 DOCK-type spans 401–574; sequence RNDLYITIER…ESFCITSFLC (174 aa). Residues 1190-1596 form the DOCKER domain; that stretch reads KTELNKEEMY…LGIQEFSACM (407 aa). Residues Ser1599, Ser1607, Ser1614, Ser1618, Ser1620, and Ser1631 each carry the phosphoserine modification. Disordered regions lie at residues 1648-1729 and 1742-1966; these read SQAS…IYPT and IGDG…VSQL. Over residues 1672–1703 the composition is skewed to low complexity; sequence PSPSTSSLSSTHSASPNVTSSAPSSARASPLL. Ser1769 is subject to Phosphoserine. Positions 1788–1794 match the SH3-binding motif; the sequence is PPVPPRP. Polar residues predominate over residues 1795-1809; that stretch reads TQTASPARHTTSVSP. Residues 1838–1863 show a composition bias toward low complexity; that stretch reads SNSPVLSGSYSSGISSLSRCSTSETS. A compositionally biased stretch (polar residues) spans 1864-1873; the sequence is GFENQVNEQS. A compositionally biased stretch (basic and acidic residues) spans 1941-1954; it reads SHLENGARRTDPGP.

This sequence belongs to the DOCK family. Interacts with nucleotide-free Rap1; functions as a guanine nucleotide exchange factor (GEF) for Rap1. Interacts (via DOCKER domain) with RAC1; functions as a guanine nucleotide exchange factor (GEF) for RAC1. Interacts with the SH3 domain of CRK. Interacts with FASLG. Interacts with ELMO2 and EPHA2; mediates activation of RAC1 by EPHA2. Interacts with USH1C (via PDZ 1 domain). Widely expressed at low level. Highly expressed in skeletal muscle, prostate and ovary. In terms of tissue distribution, may be specifically expressed in the brain and eye.

The protein localises to the cell membrane. Its subcellular location is the cell projection. The protein resides in the cytoplasm. It localises to the cytosol. In terms of biological role, functions as a guanine nucleotide exchange factor (GEF) that promotes the exchange of GDP to GTP, converting inactive GDP-bound small GTPases into their active GTP-bound form. Involved in regulation of adherens junction between cells. Plays a role in cell migration. Has a higher guanine nucleotide exchange factor activity compared to other isoforms. The chain is Dedicator of cytokinesis protein 4 (DOCK4) from Homo sapiens (Human).